Here is a 572-residue protein sequence, read N- to C-terminus: Probable terpene synthase 13 (572 aa).

3 residues coordinate Mg(2+): Asp326, Asp330, and Glu478. The DDXXD motif motif lies at 326-330; the sequence is DDIFD.

This sequence belongs to the terpene synthase family. Mg(2+) is required as a cofactor.

In terms of biological role, probable sesquiterpene synthase. The protein is Probable terpene synthase 13 (TPS13) of Ricinus communis (Castor bean).